We begin with the raw amino-acid sequence, 307 residues long: Small ribosomal subunit biogenesis GTPase RsgA (307 aa).

The region spanning 64–229 (KNSLIRPSIA…IADTPGFSSL (166 aa)) is the CP-type G domain. GTP contacts are provided by residues 113-116 (SKLD) and 172-180 (GQTGAGKTT). Positions 253, 258, 260, and 266 each coordinate Zn(2+).

Belongs to the TRAFAC class YlqF/YawG GTPase family. RsgA subfamily. Monomer. Associates with 30S ribosomal subunit, binds 16S rRNA. Requires Zn(2+) as cofactor.

The protein localises to the cytoplasm. Its function is as follows. One of several proteins that assist in the late maturation steps of the functional core of the 30S ribosomal subunit. Helps release RbfA from mature subunits. May play a role in the assembly of ribosomal proteins into the subunit. Circularly permuted GTPase that catalyzes slow GTP hydrolysis, GTPase activity is stimulated by the 30S ribosomal subunit. This is Small ribosomal subunit biogenesis GTPase RsgA from Lactococcus lactis subsp. lactis (strain IL1403) (Streptococcus lactis).